The following is a 1661-amino-acid chain: MEEAGGPMARAKARVVSATLTWRQRPPTQEEIKHGFHKVSLVSGAQMEAPQKEMFEFSRREEVEVNGFATQEEETVNCQGPRDTAGSKNFQSHGPIFSKKYIPPPKEKRPEGRLKEAVDQSDGSRQAPRTEPPCVGAMARTELLVPLPGPREPSPHPGVGLTSGSSRSLEEYRVTRTVRTTTVVGGHVDRRMSSSVTVRPVSSGEALPRGRQVSRMVPPVVVGSPPGSPSRSQAVKVLSNLVPAGHSPPASHLPRPTAGGPRSTGLGSTVGAALRQLPETGTAELKDSSALASTGIPASAHLPKNQDAPAACPDRDQGRAPDARACELWQVLGAPSSTELPLQTSQGQASVPSSPRLETHVPSPGLTHPAKQPVVPTHPGARLTPLVLPPKKKDGPVDPPAATVLPMVRSEHVTVPGQPPAPSTTRRKDVPSPGGLSAPSSPRNKFVQNSENVPVLPFTQREVVKGPGAPAASSPTRKEVVQGSSASAASSPTWKEVVKGPGAPAASSPTQKEVVQGSSAPAALFPTWKEVVKGPGAPDASFPTWKEVVKGPGAPAASSPTQKEVVQGSGAPAALSTTPKEVVKGPGAPAASSPTQKEVVKGPCAPAASSPTQKEVVQGSGAPAALSPKSTEVVQGPKGSSSIQKEAVQGIAGSLAPPLTKEETVQGPIAPATSLPKQDKGVQDSEGSPISSLTQKEVVQDPDALPAPSSSVDRVSPSPGGTPAPVPTGAEASTESQLVSDPTEGKTCTETSREEDEVALAADLEIFLDTLRSMEPPEILRTHRLPRAPRSSYLSMYATLPAIEEDQLGPWVLGPGPQEVPSLEEKEEEEEEEPENPYLSDDEKLQRRQEKAGPSPSRDLHPARPTQVSCSPLEMMKKHVAGTKGPHSELGLELQGGSRPTSRLGGSLLFGSLVPTAKEASTPEPLGTKLSALLPHGAPGLRKVPGQLPLLCSERSSPTEKLACSLPLEGWSPALKTQGKLNTRPGKVIFFSESGCQGSGREVWGDIVDASGWAPVASIRVVRGCWVLYEEPEFRGQKLVLPEGDMELRTPGTKWSPQGIGSLRRVVWDYSTPEISLFSEEGLKGEQVKLTEALKNSQGLEKPLQVASATVSAGLWLLYPKPLFEDTPYILEPGEYPTSEAWGTSDPSVGSLKPMRLGCPSVEKPGEPRAVVYEAPGFQGRSWEVSRDIYNLQQPEDSQSPHLASVGSLRVLGGCWVGYEKEGFRGHQYLLEEGEYPDWSHWGGYDELLTSLRVIRTDFGDPAVVLFEAMDFEGHGVEVSKALPDVELVQHGPSTQAIHVLSGVWVAYQEVGFSGEQYVLEKGVYRNCEDWGAGNSTLASLQPVLQVGEHDLHFVSKIQLFSRPDFLGDHFSFEDDQAALPASFRPQSCRVHGGSWILFDETNFEGDQHILSEGEFPTLTAMGCLASTVLGSLQKVSLHFSEPSIFLYGLECFEGKEIELSREVRSLQAEGFNNHVLSVRIKGGIWVLCEHSDFRGRQWLVGSCEITNWLTYSGTQRVGSLYPIKQRRVYFRLWNAALGGFLAVPDHVEDMKAGRVVVADPQAGGSCIWYYEDGLLKNQMAPTMSLQVIGPPSPGSKVVLWAESRLPRQTWSISESGHICSQMFEGQILDVKGGRGYDRDHVVLWEPDEDRASQIWTIHVL.

Disordered regions lie at residues 72–135 (EEET…PPCV), 148–168 (PGPR…SSRS), 242–268 (VPAG…GLGS), 297–321 (PASA…GRAP), 337–380 (STEL…THPG), 411–757 (EHVT…EEDE), 808–871 (LGPW…VSCS), and 883–903 (TKGP…PTSR). Residues 105–118 (PKEKRPEGRLKEAV) show a composition bias toward basic and acidic residues. The segment covering 337–353 (STELPLQTSQGQASVPS) has biased composition (polar residues). The span at 431-442 (PSPGGLSAPSSP) shows a compositional bias: low complexity. 3 stretches are compositionally biased toward polar residues: residues 507–519 (SSPT…QGSS), 628–644 (PKST…SSIQ), and 685–697 (SEGS…TQKE). Low complexity predominate over residues 706–719 (PAPSSSVDRVSPSP). Residues 731–750 (EASTESQLVSDPTEGKTCTE) are compositionally biased toward polar residues. Acidic residues predominate over residues 825–835 (EKEEEEEEEPE). The segment covering 841–851 (DDEKLQRRQEK) has biased composition (basic and acidic residues). 12 Beta/gamma crystallin 'Greek key' domains span residues 986-1023 (GKVI…RVVR), 1024-1067 (GCWV…RRVV), 1073-1113 (PEIS…TVSA), 1114-1156 (GLWL…KPMR), 1168-1213 (PRAV…RVLG), 1214-1256 (GCWV…RVIR), 1262-1302 (PAVV…HVLS), 1303-1345 (GVWV…QPVL), 1356-1393 (SKIQ…RVHG), 1394-1437 (GSWI…QKVS), 1443-1483 (PSIF…RIKG), and 1484-1525 (GIWV…YPIK). In terms of domain architecture, Ricin B-type lectin spans 1569 to 1659 (WYYEDGLLKN…DRASQIWTIH (91 aa)).

This sequence belongs to the beta/gamma-crystallin family.

This is Beta/gamma crystallin domain-containing protein 2 from Homo sapiens (Human).